A 236-amino-acid chain; its full sequence is Adenosine 5'-phosphosulfate reductase (236 aa).

Residues C123, C124, C206, and C209 each contribute to the [4Fe-4S] cluster site. C232 functions as the Nucleophile; cysteine thiosulfonate intermediate in the catalytic mechanism.

Belongs to the PAPS reductase family. CysH subfamily. It depends on [4Fe-4S] cluster as a cofactor.

The protein resides in the cytoplasm. It catalyses the reaction [thioredoxin]-disulfide + sulfite + AMP + 2 H(+) = adenosine 5'-phosphosulfate + [thioredoxin]-dithiol. It participates in sulfur metabolism; hydrogen sulfide biosynthesis; sulfite from sulfate. Functionally, catalyzes the formation of sulfite from adenosine 5'-phosphosulfate (APS) using thioredoxin as an electron donor. The protein is Adenosine 5'-phosphosulfate reductase of Streptomyces coelicolor (strain ATCC BAA-471 / A3(2) / M145).